Here is a 691-residue protein sequence, read N- to C-terminus: Elongation factor G 1 (691 aa).

The 275-residue stretch at 8–282 folds into the tr-type G domain; that stretch reads ERVRNIGIAA…AVVDYLPAPQ (275 aa). GTP contacts are provided by residues 17–24, 81–85, and 135–138; these read AHIDAGKT, DTPGH, and NKMD.

Belongs to the TRAFAC class translation factor GTPase superfamily. Classic translation factor GTPase family. EF-G/EF-2 subfamily.

It is found in the cytoplasm. Its function is as follows. Catalyzes the GTP-dependent ribosomal translocation step during translation elongation. During this step, the ribosome changes from the pre-translocational (PRE) to the post-translocational (POST) state as the newly formed A-site-bound peptidyl-tRNA and P-site-bound deacylated tRNA move to the P and E sites, respectively. Catalyzes the coordinated movement of the two tRNA molecules, the mRNA and conformational changes in the ribosome. The protein is Elongation factor G 1 of Trichodesmium erythraeum (strain IMS101).